The chain runs to 130 residues: ATP synthase epsilon chain (130 aa).

Belongs to the ATPase epsilon chain family. F-type ATPases have 2 components, CF(1) - the catalytic core - and CF(0) - the membrane proton channel. CF(1) has five subunits: alpha(3), beta(3), gamma(1), delta(1), epsilon(1). CF(0) has three main subunits: a, b and c.

Its subcellular location is the cell inner membrane. Produces ATP from ADP in the presence of a proton gradient across the membrane. This chain is ATP synthase epsilon chain (atpC), found in Fuscovulum blasticum (Rhodobacter blasticus).